The following is a 307-amino-acid chain: Bidirectional sugar transporter SWEET11 (307 aa).

At 1-14 (MAGGFLSMANPAVT) the chain is on the extracellular side. Residues 15–35 (LSGVAGNIISFLVFLAPVATF) form a helical membrane-spanning segment. Residues 17 to 100 (GVAGNIISFL…VLYLVYAPRR (84 aa)) enclose the MtN3/slv 1 domain. The Cytoplasmic segment spans residues 36–47 (LQVYKKKSTGGY). Residues 48–68 (SSVPYVVALFSSVLWIFYALV) form a helical membrane-spanning segment. Residues 69–74 (KTNSRP) are Extracellular-facing. Residues 75-95 (LLTINAFGCGVEAAYIVLYLV) form a helical membrane-spanning segment. The Cytoplasmic segment spans residues 96 to 107 (YAPRRARLRTLA). Residues 108-128 (FFLLLDVAAFALIVVTTLYLV) traverse the membrane as a helical segment. The Extracellular segment spans residues 129 to 135 (PKPHQVK). A helical transmembrane segment spans residues 136-156 (FLGSVCLAFSMAVFVAPLSII). One can recognise a MtN3/slv 2 domain in the interval 136–219 (FLGSVCLAFS…MGLYFWYRKP (84 aa)). The Cytoplasmic segment spans residues 157-168 (FKVIKTKSVEFM). Residues 169-189 (PIGLSVCLTLSAVAWFCYGLF) traverse the membrane as a helical segment. The Extracellular segment spans residues 190 to 194 (TKDPY). A helical transmembrane segment spans residues 195–215 (VMYPNVGGFFFSCVQMGLYFW). Topologically, residues 216–307 (YRKPRNTAVL…PEVIEITAAV (92 aa)) are cytoplasmic.

This sequence belongs to the SWEET sugar transporter family. In terms of assembly, interacts with COPT1 and COPT2. Interacts with APX8. In terms of tissue distribution, mostly expressed in panicles and anthers. Also detected in leaves (leaf collar, leaf auricle, leaf ligule), roots, sheaths, culms and culm nodes.

Its subcellular location is the cell membrane. In terms of biological role, mediates both low-affinity uptake and efflux of sugar across the plasma membrane. Required for pollen viability. Involved in the transport of copper, in cooperation with COPT1 and COPT2. Its function is as follows. Confers sensitivity to bacterial blight mediated by X.oryzae pv. oryzae (Xoo) in its Xa13 allelic form (e.g. cv. IR24), probably by providing the sugar required for the pathogen growth, or by reducing copper contents in xylem. However, a recessive resistance can be associated with the xa13 allele (in which the promoter is mutated leading to reduced induction upon pathogen infection, e.g. cv. IRBB13), specifically toward Xoo Philippine race 6 and Indian race PXO8. The protein is Bidirectional sugar transporter SWEET11 (SWEET11) of Oryza sativa subsp. japonica (Rice).